The following is a 186-amino-acid chain: Large ribosomal subunit protein eL18 (186 aa).

Belongs to the eukaryotic ribosomal protein eL18 family. In terms of assembly, component of the large ribosomal subunit. Mature ribosomes consist of a small (40S) and a large (60S) subunit. The 40S subunit contains about 32 different proteins and 1 molecule of RNA (18S). The 60S subunit contains 45 different proteins and 3 molecules of RNA (25S, 5.8S and 5S).

Its subcellular location is the cytoplasm. Component of the ribosome, a large ribonucleoprotein complex responsible for the synthesis of proteins in the cell. The small ribosomal subunit (SSU) binds messenger RNAs (mRNAs) and translates the encoded message by selecting cognate aminoacyl-transfer RNA (tRNA) molecules. The large subunit (LSU) contains the ribosomal catalytic site termed the peptidyl transferase center (PTC), which catalyzes the formation of peptide bonds, thereby polymerizing the amino acids delivered by tRNAs into a polypeptide chain. The nascent polypeptides leave the ribosome through a tunnel in the LSU and interact with protein factors that function in enzymatic processing, targeting, and the membrane insertion of nascent chains at the exit of the ribosomal tunnel. This chain is Large ribosomal subunit protein eL18, found in Candida albicans (strain SC5314 / ATCC MYA-2876) (Yeast).